The sequence spans 273 residues: Rhamnulose-1-phosphate aldolase (273 aa).

Glutamate 117 is an active-site residue. Residues histidine 140, histidine 142, and histidine 211 each contribute to the Zn(2+) site.

The protein belongs to the aldolase class II family. RhaD subfamily. It depends on Zn(2+) as a cofactor.

The protein resides in the cytoplasm. It carries out the reaction L-rhamnulose 1-phosphate = (S)-lactaldehyde + dihydroxyacetone phosphate. It functions in the pathway carbohydrate degradation; L-rhamnose degradation; glycerone phosphate from L-rhamnose: step 3/3. Functionally, catalyzes the reversible cleavage of L-rhamnulose-1-phosphate to dihydroxyacetone phosphate (DHAP) and L-lactaldehyde. This Listeria monocytogenes serotype 4b (strain CLIP80459) protein is Rhamnulose-1-phosphate aldolase.